The following is a 399-amino-acid chain: Nicotinate phosphoribosyltransferase (399 aa).

H217 bears the Phosphohistidine; by autocatalysis mark.

This sequence belongs to the NAPRTase family. Transiently phosphorylated on a His residue during the reaction cycle. Phosphorylation strongly increases the affinity for substrates and increases the rate of nicotinate D-ribonucleotide production. Dephosphorylation regenerates the low-affinity form of the enzyme, leading to product release.

The catalysed reaction is nicotinate + 5-phospho-alpha-D-ribose 1-diphosphate + ATP + H2O = nicotinate beta-D-ribonucleotide + ADP + phosphate + diphosphate. The protein operates within cofactor biosynthesis; NAD(+) biosynthesis; nicotinate D-ribonucleotide from nicotinate: step 1/1. Its function is as follows. Catalyzes the synthesis of beta-nicotinate D-ribonucleotide from nicotinate and 5-phospho-D-ribose 1-phosphate at the expense of ATP. The polypeptide is Nicotinate phosphoribosyltransferase (Burkholderia cenocepacia (strain HI2424)).